The primary structure comprises 420 residues: Glutamyl-tRNA reductase (420 aa).

Residues 49–52 (TCNR), serine 109, 114–116 (EPQ), and glutamine 120 contribute to the substrate site. Cysteine 50 (nucleophile) is an active-site residue. An NADP(+)-binding site is contributed by 189-194 (GAGETI).

It belongs to the glutamyl-tRNA reductase family. As to quaternary structure, homodimer.

It catalyses the reaction (S)-4-amino-5-oxopentanoate + tRNA(Glu) + NADP(+) = L-glutamyl-tRNA(Glu) + NADPH + H(+). It functions in the pathway porphyrin-containing compound metabolism; protoporphyrin-IX biosynthesis; 5-aminolevulinate from L-glutamyl-tRNA(Glu): step 1/2. In terms of biological role, catalyzes the NADPH-dependent reduction of glutamyl-tRNA(Glu) to glutamate 1-semialdehyde (GSA). This Sodalis glossinidius (strain morsitans) protein is Glutamyl-tRNA reductase.